The chain runs to 314 residues: 4-hydroxy-3-methylbut-2-enyl diphosphate reductase (314 aa).

Residue cysteine 12 coordinates [4Fe-4S] cluster. Positions 43 and 81 each coordinate (2E)-4-hydroxy-3-methylbut-2-enyl diphosphate. Positions 43 and 81 each coordinate dimethylallyl diphosphate. Positions 43 and 81 each coordinate isopentenyl diphosphate. [4Fe-4S] cluster is bound at residue cysteine 103. Histidine 131 is a (2E)-4-hydroxy-3-methylbut-2-enyl diphosphate binding site. Position 131 (histidine 131) interacts with dimethylallyl diphosphate. Position 131 (histidine 131) interacts with isopentenyl diphosphate. Glutamate 133 serves as the catalytic Proton donor. Residue threonine 170 participates in (2E)-4-hydroxy-3-methylbut-2-enyl diphosphate binding. Cysteine 198 lines the [4Fe-4S] cluster pocket. 3 residues coordinate (2E)-4-hydroxy-3-methylbut-2-enyl diphosphate: serine 226, asparagine 228, and serine 271. 3 residues coordinate dimethylallyl diphosphate: serine 226, asparagine 228, and serine 271. The isopentenyl diphosphate site is built by serine 226, asparagine 228, and serine 271.

Belongs to the IspH family. [4Fe-4S] cluster is required as a cofactor.

It catalyses the reaction isopentenyl diphosphate + 2 oxidized [2Fe-2S]-[ferredoxin] + H2O = (2E)-4-hydroxy-3-methylbut-2-enyl diphosphate + 2 reduced [2Fe-2S]-[ferredoxin] + 2 H(+). The enzyme catalyses dimethylallyl diphosphate + 2 oxidized [2Fe-2S]-[ferredoxin] + H2O = (2E)-4-hydroxy-3-methylbut-2-enyl diphosphate + 2 reduced [2Fe-2S]-[ferredoxin] + 2 H(+). It functions in the pathway isoprenoid biosynthesis; dimethylallyl diphosphate biosynthesis; dimethylallyl diphosphate from (2E)-4-hydroxy-3-methylbutenyl diphosphate: step 1/1. Its pathway is isoprenoid biosynthesis; isopentenyl diphosphate biosynthesis via DXP pathway; isopentenyl diphosphate from 1-deoxy-D-xylulose 5-phosphate: step 6/6. Catalyzes the conversion of 1-hydroxy-2-methyl-2-(E)-butenyl 4-diphosphate (HMBPP) into a mixture of isopentenyl diphosphate (IPP) and dimethylallyl diphosphate (DMAPP). Acts in the terminal step of the DOXP/MEP pathway for isoprenoid precursor biosynthesis. The sequence is that of 4-hydroxy-3-methylbut-2-enyl diphosphate reductase from Bacillus subtilis (strain 168).